The following is a 464-amino-acid chain: Glutamate decarboxylase beta (464 aa).

N6-(pyridoxal phosphate)lysine is present on lysine 275.

Belongs to the group II decarboxylase family. Pyridoxal 5'-phosphate serves as cofactor.

The catalysed reaction is L-glutamate + H(+) = 4-aminobutanoate + CO2. Its function is as follows. Converts internalized glutamate to GABA and increases the internal pH. Involved in glutamate-dependent acid resistance in gastric fluid. The polypeptide is Glutamate decarboxylase beta (gadB) (Listeria innocua serovar 6a (strain ATCC BAA-680 / CLIP 11262)).